Consider the following 504-residue polypeptide: Pre-mRNA-processing factor 19 (504 aa).

N-acetylserine is present on Ser-2. One can recognise a U-box domain in the interval 2–73 (SLICSISNEV…KPPSATSIPA (72 aa)). The may mediate interaction with PSMC5 stretch occupies residues 68–223 (ATSIPAILKA…VGLHSASIPG (156 aa)). N6-acetyllysine is present on residues Lys-122, Lys-179, Lys-244, and Lys-261. One copy of the WD 1 repeat lies at 219-259 (ASIPGILALDLCPSDTNKILTGGADKNVVVFDKSSEQILAT). WD repeat units follow at residues 262-301 (GHTK…CVQV), 304-345 (AHES…TKVT), 348-387 (TSGC…NVAN), 390-429 (GHSG…NFKT), 433-472 (DNNF…LHFT), and 473-503 (EHSG…KFYS).

The protein belongs to the WD repeat PRP19 family. In terms of assembly, homotetramer. Component of activated, catalytic and post-catalytic spliceosomes. Component of the Prp19 complex/PRP19C/Nineteen complex/NTC and related complexes described as PRP19-CDC5L splicing complex and PSO4 complex. A homotetramer of PRPF19, CDC5L, PLRG1 and BCAS2 constitute the core of those complexes. The interaction with CDC5L, PLRG1 and BCAS2 is direct within this core complex. At least three less stably associated proteins CTNNBL1, CWC15 and HSPA8 are found in the Prp19 complex. The Prp19 complex associates with the spliceosome during its assembly and remodeling recruiting additional proteins. Component of the XAB2 complex, a multimeric protein complex composed of XAB2, PRPF19, AQR, ZNF830, ISY1, and PPIE. Interacts with CWC22 and EIF4A3 in an RNA-independent manner. Interacts with RPA1 and RPA2; the PRP19-CDC5L complex is recruited to the sites of DNA repair where it interacts with the replication protein A complex (RPA). Interacts with SETMAR; required for SETMAR recruitment to site of DNA damage. Interacts with U2AF2; the interaction is direct and recruits the Prp19 complex to RNA polymerase II C-terminal domain (CTD) and the pre-mRNA. Interacts with PRPF3. Interacts with APEX1, DNTT and PSMB4. Interacts with PSMC5. Interacts with KNSTRN. Interacts (via N-terminus) with CDC5L. Interacts with KHDC4. Interacts with USB1. Interacts with DDX41.

Its subcellular location is the nucleus. The protein resides in the nucleoplasm. The protein localises to the cytoplasm. It localises to the cytoskeleton. It is found in the spindle. Its subcellular location is the lipid droplet. It catalyses the reaction S-ubiquitinyl-[E2 ubiquitin-conjugating enzyme]-L-cysteine + [acceptor protein]-L-lysine = [E2 ubiquitin-conjugating enzyme]-L-cysteine + N(6)-ubiquitinyl-[acceptor protein]-L-lysine.. It functions in the pathway protein modification; protein ubiquitination. Functionally, ubiquitin-protein ligase which is a core component of several complexes mainly involved pre-mRNA splicing and DNA repair. Required for pre-mRNA splicing as component of the spliceosome. Core component of the PRP19C/Prp19 complex/NTC/Nineteen complex which is part of the spliceosome and participates in its assembly, its remodeling and is required for its activity. During assembly of the spliceosome, mediates 'Lys-63'-linked polyubiquitination of the U4 spliceosomal protein PRPF3. Ubiquitination of PRPF3 allows its recognition by the U5 component PRPF8 and stabilizes the U4/U5/U6 tri-snRNP spliceosomal complex. Recruited to RNA polymerase II C-terminal domain (CTD) and the pre-mRNA, it may also couple the transcriptional and spliceosomal machineries. The XAB2 complex, which contains PRPF19, is also involved in pre-mRNA splicing, transcription and transcription-coupled repair. Beside its role in pre-mRNA splicing PRPF19, as part of the PRP19-CDC5L complex, plays a role in the DNA damage response/DDR. It is recruited to the sites of DNA damage by the RPA complex where PRPF19 directly ubiquitinates RPA1 and RPA2. 'Lys-63'-linked polyubiquitination of the RPA complex allows the recruitment of the ATR-ATRIP complex and the activation of ATR, a master regulator of the DNA damage response. May also play a role in DNA double-strand break (DSB) repair by recruiting the repair factor SETMAR to altered DNA. As part of the PSO4 complex may also be involved in the DNA interstrand cross-links/ICLs repair process. In addition, may also mediate 'Lys-48'-linked polyubiquitination of substrates and play a role in proteasomal degradation. May play a role in the biogenesis of lipid droplets. May play a role in neural differentiation possibly through its function as part of the spliceosome. The sequence is that of Pre-mRNA-processing factor 19 (PRPF19) from Bos taurus (Bovine).